Reading from the N-terminus, the 268-residue chain is Tryptophan synthase alpha chain (268 aa).

Active-site proton acceptor residues include E49 and D60.

This sequence belongs to the TrpA family. In terms of assembly, tetramer of two alpha and two beta chains.

The catalysed reaction is (1S,2R)-1-C-(indol-3-yl)glycerol 3-phosphate + L-serine = D-glyceraldehyde 3-phosphate + L-tryptophan + H2O. The protein operates within amino-acid biosynthesis; L-tryptophan biosynthesis; L-tryptophan from chorismate: step 5/5. Its function is as follows. The alpha subunit is responsible for the aldol cleavage of indoleglycerol phosphate to indole and glyceraldehyde 3-phosphate. This chain is Tryptophan synthase alpha chain, found in Aliivibrio fischeri (strain MJ11) (Vibrio fischeri).